A 1247-amino-acid chain; its full sequence is Structural polyprotein (1247 aa).

The host transcription inhibition stretch occupies residues 36–67 (RPAGQLAQLISAVSRLALRTVPQKPRRTRKIK). The tract at residues 53-103 (LRTVPQKPRRTRKIKKQKQVKQEQQSTRNQKKKAPKQKQTQKKKRPGRRER) is disordered. Basic residues-rich tracts occupy residues 59 to 71 (KPRR…KQKQ) and 81 to 100 (NQKK…RPGR). A Nuclear localization signal motif is present at residues 60-98 (PRRTRKIKKQKQVKQEQQSTRNQKKKAPKQKQTQKKKRP). The interval 83 to 113 (KKKAPKQKQTQKKKRPGRRERMCMKIENDCI) is binding to the viral RNA. The tract at residues 98 to 112 (PGRRERMCMKIENDC) is ribosome-binding. The cysteines at positions 112 and 127 are disulfide-linked. One can recognise a Peptidase S3 domain in the interval 112–260 (CIFEVKHEGK…KITPEGSVEW (149 aa)). Histidine 138 functions as the Charge relay system in the catalytic mechanism. The Nuclear export signal motif lies at 143 to 153 (IDNADLAKLAF). Residues 154–159 (KRSSKY) form an interaction with spike glycoprotein E2 region. Residue aspartate 160 is the Charge relay system of the active site. A dimerization of the capsid protein region spans residues 182–192 (PEGYYNWHHGA). Serine 212 functions as the Charge relay system in the catalytic mechanism. The tract at residues 218 to 222 (DNKGR) is dimerization of the capsid protein. The interval 261 to 273 (SLALPVMCLLANT) is functions as an uncleaved signal peptide for the precursor of protein E3/E2. Intrachain disulfides connect cysteine 268–cysteine 277, cysteine 282–cysteine 286, cysteine 285–cysteine 317, cysteine 343–cysteine 449, cysteine 346–cysteine 352, cysteine 415–cysteine 429, cysteine 477–cysteine 590, cysteine 525–cysteine 549, and cysteine 527–cysteine 544. A glycan (N-linked (GlcNAc...) asparagine; by host) is linked at asparagine 272. Residues 325–691 (NARENFNVYK…YYYELYPTTT (367 aa)) lie on the Extracellular side of the membrane. Residue asparagine 587 is glycosylated (N-linked (GlcNAc...) asparagine; by host). The helical transmembrane segment at 692–712 (IAVLAAASIVVASLVGLSLGM) threads the bilayer. At 713–747 (CICARRRCITPYELTPGATIPFLLGILCCVKTAKA) the chain is on the cytoplasmic side. Residues 715–719 (CARRR) are interaction with the capsid protein. S-palmitoyl cysteine; by host attachment occurs at residues cysteine 720, cysteine 740, and cysteine 741. Residues 720–740 (CITPYELTPGATIPFLLGILC) are transient transmembrane before p62-6K protein processing. Cysteine 720 and cysteine 741 are disulfide-bonded. The Extracellular segment spans residues 748–762 (ASYYEAATYLWNEQQ). Residues 763–783 (PLFWLQLLIPLSAAIVVCNCL) traverse the membrane as a helical segment. Residues 784–787 (KLLP) lie on the Cytoplasmic side of the membrane. A helical transmembrane segment spans residues 788-808 (CCCKTLTFLAVMSIGARTVSA). Over 809–1223 (YEHATVIPNT…AMSWVQKITG (415 aa)) the chain is Extracellular. 4 disulfide bridges follow: cysteine 857–cysteine 922, cysteine 870–cysteine 902, cysteine 871–cysteine 904, and cysteine 876–cysteine 886. The segment at 892-909 (VYPFMWGGAYCFCDAENT) is E1 fusion peptide loop. Asparagine 949 and asparagine 1078 each carry an N-linked (GlcNAc...) asparagine; by host glycan. 4 cysteine pairs are disulfide-bonded: cysteine 1067–cysteine 1079, cysteine 1109–cysteine 1184, cysteine 1114–cysteine 1188, and cysteine 1136–cysteine 1178. A helical membrane pass occupies residues 1224-1244 (GVGLVVAIAALILIIVLCVSF). The S-palmitoyl cysteine; by host moiety is linked to residue cysteine 1241. At 1245–1247 (SRH) the chain is on the cytoplasmic side.

As to quaternary structure, homodimer. Homomultimer. Interacts with host karyopherin KPNA4; this interaction allows the nuclear import of the viral capsid protein. Interacts with spike glycoprotein E2. Interacts with host IRAK1; the interaction leads to inhibition of IRAK1-dependent signaling. In terms of assembly, the precursor of protein E3/E2 and E1 form a heterodimer shortly after synthesis. The precursor of protein E3/E2 and E1 form a heterodimer shortly after synthesis. Processing of the precursor of protein E3/E2 into E2 and E3 results in a heterodimer of the spike glycoproteins E2 and E1. Spike at virion surface are constituted of three E2-E1 heterodimers. After target cell attachment and endocytosis, E1 change conformation to form homotrimers. Interacts with 6K protein. As to quaternary structure, interacts with spike glycoprotein E1. Processing of the precursor of protein E3/E2 into E2 and E3 results in a heterodimer of the spike glycoproteins E2 and E1. Spike at virion surface are constituted of a trimer of E2-E1 heterodimers. Interacts with 6K protein. Interacts with host MXRA8; this interaction mediates virus entry. In terms of assembly, oligomer. Interacts with spike glycoprotein E1. Interacts with spike glycoprotein E2. Post-translationally, structural polyprotein: Specific enzymatic cleavages in vivo yield mature proteins. Capsid protein is auto-cleaved during polyprotein translation, unmasking a signal peptide at the N-terminus of the precursor of E3/E2. The remaining polyprotein is then targeted to the host endoplasmic reticulum, where host signal peptidase cleaves it into pE2, 6K and E1 proteins. pE2 is further processed to mature E3 and E2 by host furin in trans-Golgi vesicle. Palmitoylated via thioester bonds. These palmitoylations may induce disruption of the C-terminus transmembrane. This would result in the reorientation of E2 C-terminus from lumenal to cytoplasmic side. In terms of processing, N-glycosylated. Post-translationally, palmitoylated via thioester bonds.

Its subcellular location is the virion. The protein localises to the host cytoplasm. The protein resides in the host cell membrane. It localises to the host nucleus. It is found in the virion membrane. Its subcellular location is the host Golgi apparatus. The protein localises to the host trans-Golgi network. The protein resides in the host endoplasmic reticulum. The catalysed reaction is Autocatalytic release of the core protein from the N-terminus of the togavirus structural polyprotein by hydrolysis of a -Trp-|-Ser- bond.. Its function is as follows. Forms an icosahedral capsid with a T=4 symmetry composed of 240 copies of the capsid protein surrounded by a lipid membrane through which penetrate 80 spikes composed of trimers of E1-E2 heterodimers. The capsid protein binds to the viral RNA genome at a site adjacent to a ribosome binding site for viral genome translation following genome release. Possesses a protease activity that results in its autocatalytic cleavage from the nascent structural protein. Following its self-cleavage, the capsid protein transiently associates with ribosomes, and within several minutes the protein binds to viral RNA and rapidly assembles into icosahedric core particles. The resulting nucleocapsid eventually associates with the cytoplasmic domain of the spike glycoprotein E2 at the cell membrane, leading to budding and formation of mature virions. In case of infection, new virions attach to target cells and after clathrin-mediated endocytosis their membrane fuses with the host endosomal membrane. This leads to the release of the nucleocapsid into the cytoplasm, followed by an uncoating event necessary for the genomic RNA to become accessible. The uncoating might be triggered by the interaction of capsid proteins with ribosomes. Binding of ribosomes would release the genomic RNA since the same region is genomic RNA-binding and ribosome-binding. Specifically inhibits interleukin-1 receptor-associated kinase 1/IRAK1-dependent signaling during viral entry, representing a means by which the alphaviruses may evade innate immune detection and activation prior to viral gene expression. Functionally, provides the signal sequence for the translocation of the precursor of protein E3/E2 to the host endoplasmic reticulum. Furin-cleaved E3 remains associated with spike glycoprotein E1 and mediates pH protection of the latter during the transport via the secretory pathway. After virion release from the host cell, the assembly protein E3 is gradually released in the extracellular space. Plays a role in viral attachment to target host cell, by binding to the cell receptor MXRA8. Synthesized as a p62 precursor which is processed by furin at the cell membrane just before virion budding, giving rise to E2-E1 heterodimer. The p62-E1 heterodimer is stable, whereas E2-E1 is unstable and dissociate at low pH. p62 is processed at the last step, presumably to avoid E1 fusion activation before its final export to cell surface. E2 C-terminus contains a transitory transmembrane that would be disrupted by palmitoylation, resulting in reorientation of the C-terminal tail from lumenal to cytoplasmic side. This step is critical since E2 C-terminus is involved in budding by interacting with capsid proteins. This release of E2 C-terminus in cytoplasm occurs lately in protein export, and precludes premature assembly of particles at the endoplasmic reticulum membrane. In terms of biological role, acts as a viroporin that participates in virus glycoprotein processing and transport to the plasma membrane, cell permeabilization and budding of viral particles. Disrupts the calcium homeostasis of the cell, probably at the endoplasmic reticulum level. This leads to cytoplasmic calcium elevation. Because of its lipophilic properties, the 6K protein is postulated to influence the selection of lipids that interact with the transmembrane domains of the glycoproteins, which, in turn, affects the deformability of the bilayer required for the extreme curvature that occurs as budding proceeds. Present in low amount in virions, about 3% compared to viral glycoproteins. Its function is as follows. Class II viral fusion protein. Fusion activity is inactive as long as E1 is bound to E2 in mature virion. After virus attachment to target cell via host MXRA8 and endocytosis, acidification of the endosome induce dissociation of E1/E2 heterodimer and concomitant trimerization of the E1 subunits. This E1 trimer is fusion active, and promotes release of viral nucleocapsid in cytoplasm after endosome and viral membrane fusion. Efficient fusion requires the presence of cholesterol and sphingolipid in the target membrane. This chain is Structural polyprotein, found in Anopheles (Human).